We begin with the raw amino-acid sequence, 312 residues long: MRLKRLSTNHLLSIADLDREDVETVLRVAERFKERYLAGERVIPILEGKTLGLIFEKPSTRTRVSFEVAMHQLGGQAFTYTKQELQLGRGEAIKDTAAVLSRYLDGVMIRARRHEDIEEFARYSEVPVINGLSDLEHPCQALTDAFTIREKLGRGPHTVAFVGDGNNVCSSLALVCATLGWDFVHAVPEGYECPDRVWREVERRAEESGSETRVVRDPKEAVREADVVYTDVWVSMGDEAEREERLRVFRPYQVNEELMSHAPEHAIVMHCMPIQRGYELTDDVADSERSVIYDQAENRLHVQKAILALLMG.

Residues 59–62, Gln86, Arg110, and 137–140 contribute to the carbamoyl phosphate site; these read STRT and HPCQ. L-ornithine-binding positions include Asn167, Asp231, and 235–236; that span reads SM. 2 residues coordinate carbamoyl phosphate: Cys271 and Arg299.

This sequence belongs to the aspartate/ornithine carbamoyltransferase superfamily. OTCase family.

The protein resides in the cytoplasm. The catalysed reaction is carbamoyl phosphate + L-ornithine = L-citrulline + phosphate + H(+). Its pathway is amino-acid biosynthesis; L-arginine biosynthesis; L-arginine from L-ornithine and carbamoyl phosphate: step 1/3. In terms of biological role, reversibly catalyzes the transfer of the carbamoyl group from carbamoyl phosphate (CP) to the N(epsilon) atom of ornithine (ORN) to produce L-citrulline. This Methanopyrus kandleri (strain AV19 / DSM 6324 / JCM 9639 / NBRC 100938) protein is Ornithine carbamoyltransferase.